The chain runs to 58 residues: Small ribosomal subunit protein bS21 (58 aa).

The interval 39-58 is disordered; that stretch reads EKPSVKRKRKSEVARKRKKF. The segment covering 43–58 has biased composition (basic residues); it reads VKRKRKSEVARKRKKF.

Belongs to the bacterial ribosomal protein bS21 family.

The protein is Small ribosomal subunit protein bS21 of Streptococcus pneumoniae (strain ATCC BAA-255 / R6).